The sequence spans 208 residues: Small ribosomal subunit protein uS4 (208 aa).

The S4 RNA-binding domain maps to 95 to 159 (RRIDNIVYRA…FKKLVRSNIE (65 aa)).

This sequence belongs to the universal ribosomal protein uS4 family. In terms of assembly, part of the 30S ribosomal subunit. Contacts protein S5. The interaction surface between S4 and S5 is involved in control of translational fidelity.

Functionally, one of the primary rRNA binding proteins, it binds directly to 16S rRNA where it nucleates assembly of the body of the 30S subunit. In terms of biological role, with S5 and S12 plays an important role in translational accuracy. The chain is Small ribosomal subunit protein uS4 from Borrelia recurrentis (strain A1).